Reading from the N-terminus, the 197-residue chain is Holliday junction branch migration complex subunit RuvA (197 aa).

Residues Met-1–Glu-64 form a domain I region. Residues Thr-65 to Pro-145 are domain II. Positions Ala-146–Ala-148 are flexible linker. The segment at Ala-148 to Ser-197 is domain III.

Belongs to the RuvA family. Homotetramer. Forms an RuvA(8)-RuvB(12)-Holliday junction (HJ) complex. HJ DNA is sandwiched between 2 RuvA tetramers; dsDNA enters through RuvA and exits via RuvB. An RuvB hexamer assembles on each DNA strand where it exits the tetramer. Each RuvB hexamer is contacted by two RuvA subunits (via domain III) on 2 adjacent RuvB subunits; this complex drives branch migration. In the full resolvosome a probable DNA-RuvA(4)-RuvB(12)-RuvC(2) complex forms which resolves the HJ.

The protein resides in the cytoplasm. Its function is as follows. The RuvA-RuvB-RuvC complex processes Holliday junction (HJ) DNA during genetic recombination and DNA repair, while the RuvA-RuvB complex plays an important role in the rescue of blocked DNA replication forks via replication fork reversal (RFR). RuvA specifically binds to HJ cruciform DNA, conferring on it an open structure. The RuvB hexamer acts as an ATP-dependent pump, pulling dsDNA into and through the RuvAB complex. HJ branch migration allows RuvC to scan DNA until it finds its consensus sequence, where it cleaves and resolves the cruciform DNA. The chain is Holliday junction branch migration complex subunit RuvA from Roseiflexus sp. (strain RS-1).